Here is a 211-residue protein sequence, read N- to C-terminus: Phosphoglycerate mutase (211 aa).

Residues 14–21 and 27–28 each bind substrate; these read RHGESEWN and TG. His-15 acts as the Tele-phosphohistidine intermediate in catalysis. The residue at position 37 (Thr-37) is a Phosphothreonine. Ser-62 carries the post-translational modification Phosphoserine. Substrate contacts are provided by residues Arg-66, 93 to 96, Lys-104, 120 to 121, and 164 to 165; these read ERYY, RR, and GN. Glu-93 acts as the Proton donor/acceptor in catalysis. Tyr-96 is subject to Phosphotyrosine. Ser-166 carries the phosphoserine modification.

The protein belongs to the phosphoglycerate mutase family. BPG-dependent PGAM subfamily. In terms of assembly, monomer. In terms of processing, the N-terminus is blocked.

It catalyses the reaction (2R)-2-phosphoglycerate = (2R)-3-phosphoglycerate. Its pathway is carbohydrate degradation; glycolysis; pyruvate from D-glyceraldehyde 3-phosphate: step 3/5. This Schizosaccharomyces pombe (strain 972 / ATCC 24843) (Fission yeast) protein is Phosphoglycerate mutase (gpm1).